The chain runs to 523 residues: GMP synthase [glutamine-hydrolyzing] (523 aa).

The 198-residue stretch at 8 to 205 folds into the Glutamine amidotransferase type-1 domain; it reads RILILDFGSQ…IRELCECEAL (198 aa). Cysteine 85 acts as the Nucleophile in catalysis. Catalysis depends on residues histidine 179 and glutamate 181. The region spanning 206–398 is the GMPS ATP-PPase domain; it reads WTPSNIISDA…LGLPYDMVYR (193 aa). 233-239 is a binding site for ATP; it reads SGGVDSS.

In terms of assembly, homodimer.

It catalyses the reaction XMP + L-glutamine + ATP + H2O = GMP + L-glutamate + AMP + diphosphate + 2 H(+). Its pathway is purine metabolism; GMP biosynthesis; GMP from XMP (L-Gln route): step 1/1. Its function is as follows. Catalyzes the synthesis of GMP from XMP. The protein is GMP synthase [glutamine-hydrolyzing] of Alcanivorax borkumensis (strain ATCC 700651 / DSM 11573 / NCIMB 13689 / SK2).